A 106-amino-acid polypeptide reads, in one-letter code: Isocitrate dehydrogenase [NAD] subunit gamma, mitochondrial (106 aa).

This sequence belongs to the isocitrate and isopropylmalate dehydrogenases family. In terms of assembly, heterooligomer of subunits alpha (IDH3A), beta (IDH3B), and gamma (IDH3G) in the apparent ratio of 2:1:1. The heterodimer containing one IDH3A and one IDH3B subunit and the heterodimer containing one IDH3A and one IDH3G subunit assemble into a heterotetramer (which contains two subunits of IDH3A, one of IDH3B and one of IDH3G) and further into the heterooctamer.

Its subcellular location is the mitochondrion. The heterotetramer and the heterodimer composed of IDH3A and IDH3G subunits can be allosterically activated by citrate (CIT) or/and ADP, and the two activators can act independently or synergistically. The heterodimer composed of IDH3A and IDH3B subunits cannot be allosterically regulated and the allosteric regulation of the heterotetramer is through the IDH3G subunit and not the IDH3B subunit. The IDH3G subunit contains the allosteric site which consists of a CIT-binding site and an ADP-binding site, and the binding of CIT and ADP causes conformational changes at the allosteric site which are transmitted to the active site in the catalytic subunit (IDH3A) through a cascade of conformational changes at the heterodimer interface, leading to stabilization of the isocitrate-binding at the active site and thus activation of the enzyme. ATP can activate the heterotetramer and the heterodimer composed of IDH3A and IDH3G subunits at low concentrations but inhibits their activities at high concentrations, whereas ATP exhibits only inhibitory effect on the heterodimer composed of IDH3A and IDH3B subunits. Functionally, regulatory subunit which plays a role in the allosteric regulation of the enzyme catalyzing the decarboxylation of isocitrate (ICT) into alpha-ketoglutarate. The heterodimer composed of the alpha (IDH3A) and beta (IDH3B) subunits and the heterodimer composed of the alpha (IDH3A) and gamma (IDH3G) subunits, have considerable basal activity but the full activity of the heterotetramer (containing two subunits of IDH3A, one of IDH3B and one of IDH3G) requires the assembly and cooperative function of both heterodimers. The protein is Isocitrate dehydrogenase [NAD] subunit gamma, mitochondrial (IDH3G) of Sus scrofa (Pig).